Consider the following 397-residue polypeptide: Penicillopepsin-1 (397 aa).

An N-terminal signal peptide occupies residues 1-20 (MVVFSQVTVALTCFSAIASA). A propeptide spans 21-71 (AAVRQEPPQGFTVNQVQKAVPGTRTVNLPGLYANALVKYGATVPATVHAAA) (activation peptide). Positions 87 to 394 (YLTPVTIGSS…DSEGPRLGFA (308 aa)) constitute a Peptidase A1 domain. Residues Asp103 and Asp285 contribute to the active site. Asn311 is a glycosylation site (N-linked (GlcNAc...) asparagine). The cysteines at positions 322 and 357 are disulfide-linked.

Belongs to the peptidase A1 family. Monomer.

The protein resides in the secreted. It carries out the reaction Hydrolysis of proteins with broad specificity similar to that of pepsin A, preferring hydrophobic residues at P1 and P1', but also cleaving 20-Gly-|-Glu-21 in the B chain of insulin. Clots milk, and activates trypsinogen.. In terms of biological role, secreted aspartic endopeptidase that allows assimilation of proteinaceous substrates. The scissile peptide bond is attacked by a nucleophilic water molecule activated by two aspartic residues in the active site. Shows a broad primary substrate specificity. Favors hydrophobic residues at the P1 and P1' positions, but can also activate trypsinogen and hydrolyze the B chain of insulin between positions 'Gly-20' and 'Glu-21'. The protein is Penicillopepsin-1 of Penicillium roqueforti.